A 529-amino-acid chain; its full sequence is Peptide chain release factor 3 (529 aa).

A tr-type G domain is found at 7 to 275 (EQRRTFGIIS…AVVELAPSPR (269 aa)). GTP is bound by residues 16 to 23 (SHPDAGKT), 84 to 88 (DTPGH), and 138 to 141 (NKLD).

Belongs to the TRAFAC class translation factor GTPase superfamily. Classic translation factor GTPase family. PrfC subfamily.

The protein localises to the cytoplasm. Its function is as follows. Increases the formation of ribosomal termination complexes and stimulates activities of RF-1 and RF-2. It binds guanine nucleotides and has strong preference for UGA stop codons. It may interact directly with the ribosome. The stimulation of RF-1 and RF-2 is significantly reduced by GTP and GDP, but not by GMP. The chain is Peptide chain release factor 3 from Syntrophus aciditrophicus (strain SB).